The chain runs to 294 residues: Nucleotide-binding protein Reut_A0350 (294 aa).

8–15 (GISGSGKS) is a binding site for ATP. 57–60 (DIRS) contacts GTP.

This sequence belongs to the RapZ-like family.

Its function is as follows. Displays ATPase and GTPase activities. The polypeptide is Nucleotide-binding protein Reut_A0350 (Cupriavidus pinatubonensis (strain JMP 134 / LMG 1197) (Cupriavidus necator (strain JMP 134))).